The primary structure comprises 305 residues: UDP-3-O-acyl-N-acetylglucosamine deacetylase (305 aa).

Residues H79, H238, and D242 each contribute to the Zn(2+) site. H265 serves as the catalytic Proton donor.

It belongs to the LpxC family. The cofactor is Zn(2+).

It carries out the reaction a UDP-3-O-[(3R)-3-hydroxyacyl]-N-acetyl-alpha-D-glucosamine + H2O = a UDP-3-O-[(3R)-3-hydroxyacyl]-alpha-D-glucosamine + acetate. It functions in the pathway glycolipid biosynthesis; lipid IV(A) biosynthesis; lipid IV(A) from (3R)-3-hydroxytetradecanoyl-[acyl-carrier-protein] and UDP-N-acetyl-alpha-D-glucosamine: step 2/6. Catalyzes the hydrolysis of UDP-3-O-myristoyl-N-acetylglucosamine to form UDP-3-O-myristoylglucosamine and acetate, the committed step in lipid A biosynthesis. The sequence is that of UDP-3-O-acyl-N-acetylglucosamine deacetylase from Proteus mirabilis (strain HI4320).